Reading from the N-terminus, the 289-residue chain is MAEQTASGYIQHHLQNLTFGHLPNGDWGFAHTAAEAKEMGFWAFHVDTLGWSVALGLIFVLIFRMAAKKATSGQPGALQNFVEVLVEFVDGSVKDSFHGRSAVIAPLALTIFVWVFLMNAVDLVPVDWIPQLAMMISGDEHIPFRAVPTTDPNATLGMALSVFALIIFYSIKVKGIGGFIGELTLHPFGSKNIFVQALLIPVNFLLEFVTLIAKPISLALRLFGNMYAGELVFILIAVMFGSGLLWLSGLGIVLQWAWAVFHILIITLQAFIFMMLTIVYLSMAHEDNH.

Helical transmembrane passes span 43–63 (AFHV…VLIF), 101–121 (SAVI…MNAV), 160–180 (LSVF…GGFI), 193–213 (IFVQ…TLIA), 232–252 (VFIL…GLGI), and 259–279 (AVFH…LTIV).

This sequence belongs to the ATPase A chain family. As to quaternary structure, F-type ATPases have 2 components, CF(1) - the catalytic core - and CF(0) - the membrane proton channel. CF(1) has five subunits: alpha(3), beta(3), gamma(1), delta(1), epsilon(1). CF(0) has three main subunits: a(1), b(2) and c(9-12). The alpha and beta chains form an alternating ring which encloses part of the gamma chain. CF(1) is attached to CF(0) by a central stalk formed by the gamma and epsilon chains, while a peripheral stalk is formed by the delta and b chains.

The protein resides in the cell inner membrane. Key component of the proton channel; it plays a direct role in the translocation of protons across the membrane. The chain is ATP synthase subunit a from Pseudomonas syringae pv. tomato (strain ATCC BAA-871 / DC3000).